We begin with the raw amino-acid sequence, 329 residues long: Transcription factor RAX1 (329 aa).

HTH myb-type domains lie at 9 to 62 (KTKV…LNYL) and 63 to 117 (RPNI…RKKL). 2 DNA-binding regions (H-T-H motif) span residues 38-62 (WISF…LNYL) and 90-113 (WSII…NTKL). Composition is skewed to low complexity over residues 122 to 131 (SDSSSSAMAS) and 144 to 154 (PTSPTTIPSSS). Residues 122–162 (SDSSSSAMASPYLNPISQDVKRPTSPTTIPSSSYNPYAENP) are disordered.

As to expression, mostly expressed in roots. Also present in shoot tips and flower buds.

The protein localises to the nucleus. Functionally, transcription activator of genes involved in the regulation of meristematic competence, such as CUC2. Positively regulates axillary meristems (AMs) formation and development, especially at early phases of vegetative growth, probably by specifying a stem cell niche for AM formation. Modulates the negative regulation mediated by gibberellic acid on the timing of developmental phase transitions. The protein is Transcription factor RAX1 (RAX1) of Arabidopsis thaliana (Mouse-ear cress).